A 362-amino-acid chain; its full sequence is Phosphoserine aminotransferase (362 aa).

L-glutamate-binding residues include serine 9 and arginine 42. Pyridoxal 5'-phosphate-binding positions include 76–77 (GR), tryptophan 102, threonine 153, aspartate 174, and glutamine 197. Residue lysine 198 is modified to N6-(pyridoxal phosphate)lysine. 239 to 240 (NT) is a binding site for pyridoxal 5'-phosphate.

It belongs to the class-V pyridoxal-phosphate-dependent aminotransferase family. SerC subfamily. In terms of assembly, homodimer. It depends on pyridoxal 5'-phosphate as a cofactor.

The protein resides in the cytoplasm. The catalysed reaction is O-phospho-L-serine + 2-oxoglutarate = 3-phosphooxypyruvate + L-glutamate. The enzyme catalyses 4-(phosphooxy)-L-threonine + 2-oxoglutarate = (R)-3-hydroxy-2-oxo-4-phosphooxybutanoate + L-glutamate. It functions in the pathway amino-acid biosynthesis; L-serine biosynthesis; L-serine from 3-phospho-D-glycerate: step 2/3. Its pathway is cofactor biosynthesis; pyridoxine 5'-phosphate biosynthesis; pyridoxine 5'-phosphate from D-erythrose 4-phosphate: step 3/5. In terms of biological role, catalyzes the reversible conversion of 3-phosphohydroxypyruvate to phosphoserine and of 3-hydroxy-2-oxo-4-phosphonooxybutanoate to phosphohydroxythreonine. The chain is Phosphoserine aminotransferase from Escherichia coli O1:K1 / APEC.